The primary structure comprises 187 residues: Large ribosomal subunit protein eL18A (187 aa).

2 positions are modified to phosphoserine: serine 16 and serine 64. Residues threonine 87, threonine 89, and threonine 134 each carry the phosphothreonine modification. Serine 136 bears the Phosphoserine mark. Threonine 138 carries the phosphothreonine modification.

It belongs to the eukaryotic ribosomal protein eL18 family. As to quaternary structure, component of the large ribosomal subunit (LSU). Mature yeast ribosomes consist of a small (40S) and a large (60S) subunit. The 40S small subunit contains 1 molecule of ribosomal RNA (18S rRNA) and at least 33 different proteins. The large 60S subunit contains 3 rRNA molecules (25S, 5.8S and 5S rRNA) and at least 46 different proteins. eL18 interacts with NAP1.

The protein localises to the cytoplasm. Its function is as follows. Component of the ribosome, a large ribonucleoprotein complex responsible for the synthesis of proteins in the cell. The small ribosomal subunit (SSU) binds messenger RNAs (mRNAs) and translates the encoded message by selecting cognate aminoacyl-transfer RNA (tRNA) molecules. The large subunit (LSU) contains the ribosomal catalytic site termed the peptidyl transferase center (PTC), which catalyzes the formation of peptide bonds, thereby polymerizing the amino acids delivered by tRNAs into a polypeptide chain. The nascent polypeptides leave the ribosome through a tunnel in the LSU and interact with protein factors that function in enzymatic processing, targeting, and the membrane insertion of nascent chains at the exit of the ribosomal tunnel. This Schizosaccharomyces pombe (strain 972 / ATCC 24843) (Fission yeast) protein is Large ribosomal subunit protein eL18A (rpl1801).